The following is a 22-amino-acid chain: Phospholipase A2 (22 aa).

The protein belongs to the phospholipase A2 family. The cofactor is Ca(2+).

It is found in the secreted. The catalysed reaction is a 1,2-diacyl-sn-glycero-3-phosphocholine + H2O = a 1-acyl-sn-glycero-3-phosphocholine + a fatty acid + H(+). Its function is as follows. PA2 catalyzes the calcium-dependent hydrolysis of the 2-acyl groups in 3-sn-phosphoglycerides. The sequence is that of Phospholipase A2 from Struthio camelus (Common ostrich).